The primary structure comprises 1196 residues: Phosphatidylinositol-3,5-bisphosphate 3-phosphatase MTMR3 (1196 aa).

Residue S8 is modified to Phosphoserine. Positions 155 to 576 constitute a Myotubularin phosphatase domain; sequence EHVTSRFKNE…RNLMLWSAVY (422 aa). Residues N326, N351, and I352 each coordinate a 1,2-diacyl-sn-glycero-3-phospho-(1D-myo-inositol-3,5-bisphosphate). The a 1,2-diacyl-sn-glycero-3-phospho-(1D-myo-inositol-3-phosphate) site is built by N326, N351, and I352. Catalysis depends on C413, which acts as the Phosphocysteine intermediate. Positions 414, 415, 416, 417, 418, 419, 455, and 459 each coordinate a 1,2-diacyl-sn-glycero-3-phospho-(1D-myo-inositol-3,5-bisphosphate). Residues S414, D415, G416, W417, D418, and R419 each coordinate a 1,2-diacyl-sn-glycero-3-phospho-(1D-myo-inositol-3-phosphate). R459 contributes to the a 1,2-diacyl-sn-glycero-3-phospho-(1D-myo-inositol-3-phosphate) binding site. Residues 587-612 form a disordered region; it reads DDSCAPYPVPGTSPDEPPLSRLPKTR. Positions 593-603 are enriched in pro residues; that stretch reads YPVPGTSPDEP. Residues S613, S633, S647, and S651 each carry the phosphoserine modification. Disordered regions lie at residues 697-719 and 855-900; these read TKEE…EVKE and ESGP…HRTS. S907 bears the Phosphoserine mark. Positions 993-1008 are enriched in polar residues; that stretch reads NSHSGRPSTTSSPDQP. The disordered stretch occupies residues 993-1019; the sequence is NSHSGRPSTTSSPDQPSRSHLDDDGMP. The stretch at 1027 to 1060 forms a coiled coil; the sequence is QRLRQIESGHQQEVETLKKQVQELKSRLESQYLT. At S1062 the chain carries Phosphoserine. The FYVE-type zinc-finger motif lies at 1117-1177; that stretch reads DHLAAHCYAC…VCKSCYSSLH (61 aa). Zn(2+)-binding residues include C1123, C1126, C1139, C1142, C1147, C1150, C1169, and C1172.

The protein belongs to the protein-tyrosine phosphatase family. Non-receptor class myotubularin subfamily. Forms heterodimers with MTMR4 that recruit both CEP55 and PLK1; occurs during early mitosis, regulates the phosphorylation of CEP55 by PLK1 and its recruitment to the midbody where it mediates cell abscission.

It localises to the cytoplasm. The protein localises to the cytosol. It is found in the membrane. The enzyme catalyses a 1,2-diacyl-sn-glycero-3-phospho-(1D-myo-inositol-3,5-bisphosphate) + H2O = a 1,2-diacyl-sn-glycero-3-phospho-(1D-myo-inositol-5-phosphate) + phosphate. It catalyses the reaction a 1,2-diacyl-sn-glycero-3-phospho-(1D-myo-inositol-3-phosphate) + H2O = a 1,2-diacyl-sn-glycero-3-phospho-(1D-myo-inositol) + phosphate. It carries out the reaction 1,2-dihexadecanoyl-sn-glycero-3-phospho-(1D-myo-inositol-3-phosphate) + H2O = 1,2-dihexadecanoyl-sn-glycero-3-phospho-(1D-myo-inositol) + phosphate. The catalysed reaction is 1,2-dioctanoyl-sn-glycero-3-phospho-(1-D-myo-inositol-3-phosphate) + H2O = 1,2-dioctanoyl-sn-glycero-3-phospho-(1D-myo-inositol) + phosphate. The enzyme catalyses 1,2-dihexadecanoyl-sn-glycero-3-phospho-(1D-myo-inositol-3,5-phosphate) + H2O = 1,2-dihexadecanoyl-sn-glycero-3-phospho-(1D-myo-inositol-5-phosphate) + phosphate. Lipid phosphatase that specifically dephosphorylates the D-3 position of phosphatidylinositol 3-phosphate and phosphatidylinositol 3,5-bisphosphate, generating phosphatidylinositol and phosphatidylinositol 5-phosphate. Decreases the levels of phosphatidylinositol 3-phosphate, a phospholipid found in cell membranes where it acts as key regulator of both cell signaling and intracellular membrane traffic. Could also have a molecular sequestering/adapter activity and regulate biological processes independently of its phosphatase activity. It includes the regulation of midbody abscission during mitotic cytokinesis. The protein is Phosphatidylinositol-3,5-bisphosphate 3-phosphatase MTMR3 of Mus musculus (Mouse).